A 140-amino-acid polypeptide reads, in one-letter code: PDZ domain-containing protein 11 (140 aa).

The PDZ domain maps to 47 to 129 (IVTLKKPPGA…ISMRVRFFPY (83 aa)).

In terms of assembly, interacts with ATP2B1, ATP2B2, ATP2B3, ATP2B4 and ATP7A. Interacts with PLEKHA7 (via WW domains) at zonula adherens; this interaction is essential for the interaction between PLEKHA7 and the ADAM10-binding protein TSPAN33. Interacts with SLC5A6.

It localises to the cytoplasm. It is found in the cell junction. The protein localises to the adherens junction. Its subcellular location is the cell membrane. Mediates docking of ADAM10 to zonula adherens by interacting with PLEKHA7 which is required for PLEKHA7 to interact with the ADAM10-binding protein TSPAN33. This chain is PDZ domain-containing protein 11 (PDZD11), found in Bos taurus (Bovine).